The primary structure comprises 246 residues: MYTRYSYSPTLGKTYVYDNKYFKNLGAVIKNAKRKKHLEEHEHEERNLDSLDKYLVAEDPFLGPGKNQKLTLFKEIRSVKPDTMKLVVNWSGREFLRETWTRFMEDSFPIVNDQEIMDVFLSVNMRPTKPNRCYRFLAQHALRCDPDYIPHEVIRIVEPSYVGSNNEYRISLAKKYGGCPVMNLHAEYTNSFEDFITNVIWENFYKPIVYVGTDSAEEEEILLEVSLIFKIKEFAPDAPLYTGPAY.

It belongs to the polyhedrin family.

In terms of biological role, major component of the virus occlusion bodies, which are large proteinaceous structures (polyhedra), that protect the virus from the outside environment for extended periods until they are ingested by insect larvae. In Heliothis zea nuclear polyhedrosis virus (HzSNPV), this protein is Polyhedrin (PH).